We begin with the raw amino-acid sequence, 126 residues long: MTAKNAVLQLSIHEERTRKKALVTVSRFSGVTSITMDKSGKMTIVGEVDVPAVVMKLRKLCNTEIVSVDDVKPPVKKPEPEKPAESIAYPVPMNYAYQFNPAYANSYYHQPYGNCRVVDEPNCVIM.

An HMA domain is found at 3–69; it reads AKNAVLQLSI…LCNTEIVSVD (67 aa). Position 123 is a cysteine methyl ester (Cys-123). A lipid anchor (S-farnesyl cysteine) is attached at Cys-123. Residues 124–126 constitute a propeptide, removed in mature form; sequence VIM.

This sequence belongs to the HIPP family.

Its function is as follows. Probable heavy-metal-binding protein. This chain is Heavy metal-associated isoprenylated plant protein 14, found in Arabidopsis thaliana (Mouse-ear cress).